The primary structure comprises 388 residues: Chitinase 4 (388 aa).

The GH18 domain maps to 22–375; it reads FKTCVYFSNW…KNFVDQLGGV (354 aa). 2 N-linked (GlcNAc...) asparagine glycosylation sites follow: N30 and N82. Residues 82 to 83 and 109 to 112 each bind chitin; these read NQ and GGWG. N123 and N132 each carry an N-linked (GlcNAc...) asparagine glycan. The active-site Proton donor is the E151. A chitin-binding site is contributed by Y152. N155 carries N-linked (GlcNAc...) asparagine glycosylation. 208–211 contacts chitin; that stretch reads MCYD. Residue N237 is glycosylated (N-linked (GlcNAc...) asparagine). W350 contributes to the chitin binding site.

It belongs to the glycosyl hydrolase 18 family. Chitinase class V subfamily.

It is found in the secreted. The enzyme catalyses Random endo-hydrolysis of N-acetyl-beta-D-glucosaminide (1-&gt;4)-beta-linkages in chitin and chitodextrins.. In terms of biological role, chitinase involved in the remodeling of chitin in the fungal cell wall. Plays a role in sporulation. The polypeptide is Chitinase 4 (CHT4) (Candida albicans (strain SC5314 / ATCC MYA-2876) (Yeast)).